Reading from the N-terminus, the 485-residue chain is Glutamyl-tRNA(Gln) amidotransferase subunit A (485 aa).

Active-site charge relay system residues include lysine 78 and serine 153. Serine 177 functions as the Acyl-ester intermediate in the catalytic mechanism.

Belongs to the amidase family. GatA subfamily. In terms of assembly, heterotrimer of A, B and C subunits.

It carries out the reaction L-glutamyl-tRNA(Gln) + L-glutamine + ATP + H2O = L-glutaminyl-tRNA(Gln) + L-glutamate + ADP + phosphate + H(+). Allows the formation of correctly charged Gln-tRNA(Gln) through the transamidation of misacylated Glu-tRNA(Gln) in organisms which lack glutaminyl-tRNA synthetase. The reaction takes place in the presence of glutamine and ATP through an activated gamma-phospho-Glu-tRNA(Gln). The polypeptide is Glutamyl-tRNA(Gln) amidotransferase subunit A (Bacillus cytotoxicus (strain DSM 22905 / CIP 110041 / 391-98 / NVH 391-98)).